We begin with the raw amino-acid sequence, 125 residues long: Small ribosomal subunit protein bS6 (125 aa).

This sequence belongs to the bacterial ribosomal protein bS6 family.

In terms of biological role, binds together with bS18 to 16S ribosomal RNA. The chain is Small ribosomal subunit protein bS6 (rpsF) from Pasteurella multocida (strain Pm70).